A 205-amino-acid chain; its full sequence is Small ribosomal subunit protein uS4c (205 aa).

Residues 22-42 (TSKISKKTNTPGEHGQPQNKL) form a disordered region. The segment covering 28-42 (KTNTPGEHGQPQNKL) has biased composition (polar residues). The region spanning 94–157 (MRLDNIVYRL…ASRDLVKKFV (64 aa)) is the S4 RNA-binding domain.

It belongs to the universal ribosomal protein uS4 family. As to quaternary structure, part of the 30S ribosomal subunit. Contacts protein S5. The interaction surface between S4 and S5 is involved in control of translational fidelity.

The protein localises to the plastid. It is found in the chloroplast. In terms of biological role, one of the primary rRNA binding proteins, it binds directly to 16S rRNA where it nucleates assembly of the body of the 30S subunit. Functionally, with S5 and S12 plays an important role in translational accuracy. This chain is Small ribosomal subunit protein uS4c (rps4), found in Tupiella akineta (Green alga).